The chain runs to 599 residues: E3 ubiquitin-protein ligase Kcmf1 (599 aa).

The ZZ-type zinc finger occupies 4 to 60 (HEGVSCDSCLKSNFNGRRYKCLICYDYDLCADCYEDGVTSTRHLVEHPMQCILTRSD). Positions 9, 12, 24, 27, 33, 36, 46, and 50 each coordinate Zn(2+). The segment at 78–101 (FTCPYCKKMGFSDATLLEHVSAEH) adopts a C2H2-type zinc-finger fold. 5 disordered regions span residues 155-193 (HGGGVRRIPGRTLGGPRTRRSNMHFSSSSGLSALSPSGR), 229-253 (DRQQVTASRQIDRLPRRAHPIVSTS), 269-294 (GSGGSGAVGSGSGGGSGATAPPNLRT), 466-486 (VEQQQQQQQLQPAMVRQVNQM), and 507-599 (NTTQ…PDTR). 2 stretches are compositionally biased toward low complexity: residues 160-170 (RRIPGRTLGGP) and 180-192 (SSSSGLSALSPSG). Gly residues predominate over residues 269 to 285 (GSGGSGAVGSGSGGGSG). Positions 513-532 (GTGGLGGAGATAAPGGGASG) are enriched in gly residues. The span at 538–547 (TADRGIERRS) shows a compositional bias: basic and acidic residues. Residues 559 to 593 (SQQPQQQQQSTANPAASQQKYKQNASAATAAGNTN) are compositionally biased toward low complexity.

The protein belongs to the KCMF1 family. Interacts with poe.

The enzyme catalyses S-ubiquitinyl-[E2 ubiquitin-conjugating enzyme]-L-cysteine + [acceptor protein]-L-lysine = [E2 ubiquitin-conjugating enzyme]-L-cysteine + N(6)-ubiquitinyl-[acceptor protein]-L-lysine.. Functionally, has intrinsic E3 ubiquitin ligase activity and promotes ubiquitination. Involved in the negative regulation of the Ras/MAPK signaling pathway in the wing by acting with the E2 enzyme Unc6 and the putative E3 ligases poe and Ufd4 to mediate the ubiquitination and proteasomal degradation of rl/MAPK. The sequence is that of E3 ubiquitin-protein ligase Kcmf1 from Drosophila melanogaster (Fruit fly).